Consider the following 1297-residue polypeptide: Insulin receptor-related protein (1297 aa).

The first 26 residues, 1–26 (MAVPSLWPWGACLPVIFLSLGFGLDT), serve as a signal peptide directing secretion. N-linked (GlcNAc...) asparagine glycosylation occurs at N47. Disulfide bonds link C214–C222, C216–C228, C229–C237, C233–C246, C249–C258, C262–C274, C280–C300, C304–C317, and C320–C324. An N-linked (GlcNAc...) asparagine glycan is attached at N311. 5 N-linked (GlcNAc...) asparagine glycosylation sites follow: N411, N492, N528, N616, and N634. Fibronectin type-III domains lie at 483–603 (QTRT…TLPA) and 607–707 (VPQD…AQEA). C657 and C864 are joined by a disulfide. Disordered stretches follow at residues 666–687 (SNND…ESDC) and 732–758 (SINK…GNSS). The span at 675-685 (EDGDPEAEMES) shows a compositional bias: acidic residues. Residues 747–921 (AAGPLRLGGN…PEEEDAGGLH (175 aa)) lie on the Extracellular side of the membrane. 3 N-linked (GlcNAc...) asparagine glycosylation sites follow: N756, N885, and N898. A Fibronectin type-III 3 domain is found at 818 to 913 (IPGKVAWEAS…SVAFYILGPE (96 aa)). Residues 922-943 (VLLTATPVGLTLLIVLAALGFF) traverse the membrane as a helical segment. Topologically, residues 944–1297 (YGKKRNRTLY…CSPQNGGPGH (354 aa)) are cytoplasmic. The 276-residue stretch at 979–1254 (ISIIRELGQG…SIQEELRPSF (276 aa)) folds into the Protein kinase domain. ATP contacts are provided by residues 985–993 (LGQGSFGMV) and K1013. D1115 acts as the Proton acceptor in catalysis. Residues Y1145 and Y1146 each carry the phosphotyrosine; by autocatalysis modification. The tract at residues 1267-1297 (GARGSLPTTDAEPDSSPTPRDCSPQNGGPGH) is disordered. The span at 1281 to 1297 (SSPTPRDCSPQNGGPGH) shows a compositional bias: polar residues.

The protein belongs to the protein kinase superfamily. Tyr protein kinase family. Insulin receptor subfamily. Probable tetramer of 2 alpha and 2 beta chains linked by disulfide bonds. The alpha chains contribute to the formation of the ligand-binding domain, while the beta chains carry the kinase domain. Post-translationally, autophosphorylated on tyrosine residues between pH 7.9 and pH 10.5.

The protein resides in the membrane. The enzyme catalyses L-tyrosyl-[protein] + ATP = O-phospho-L-tyrosyl-[protein] + ADP + H(+). Receptor with tyrosine-protein kinase activity. Functions as a pH sensing receptor which is activated by increased extracellular pH. Activates an intracellular signaling pathway that involves IRS1 and AKT1/PKB. The protein is Insulin receptor-related protein (INSRR) of Homo sapiens (Human).